Consider the following 236-residue polypeptide: Outer membrane protein P.III (236 aa).

An N-terminal signal peptide occupies residues 1–22 (MTKQLKLSALFVALLASGTAVA). 4 tandem repeats follow at residues 69–70 (VP), 71–72 (EP), 73–74 (EP), and 75–76 (AP). The tract at residues 69-76 (VPEPEPAP) is 4 X 2 AA tandem repeats of X-P. The 138-residue stretch at 86–223 (YVDETISLSA…RVDVKIRSIV (138 aa)) folds into the OmpA-like domain. A disulfide bridge connects residues Cys185 and Cys208.

The protein belongs to the outer membrane OOP (TC 1.B.6) superfamily.

The protein resides in the cell outer membrane. This is Outer membrane protein P.III from Neisseria gonorrhoeae.